The chain runs to 459 residues: tRNA modification GTPase MnmE (459 aa).

(6S)-5-formyl-5,6,7,8-tetrahydrofolate is bound by residues Arg-23, Glu-86, and Arg-125. Residues Gly-221–Val-380 form the TrmE-type G domain. K(+) is bound at residue Asn-231. Residues Asn-231–Ser-236, Thr-250–Thr-256, and Asp-275–Gly-278 contribute to the GTP site. Ser-235 contributes to the Mg(2+) binding site. K(+) is bound by residues Thr-250, Ile-252, and Thr-255. Mg(2+) is bound at residue Thr-256. Lys-459 lines the (6S)-5-formyl-5,6,7,8-tetrahydrofolate pocket.

This sequence belongs to the TRAFAC class TrmE-Era-EngA-EngB-Septin-like GTPase superfamily. TrmE GTPase family. In terms of assembly, homodimer. Heterotetramer of two MnmE and two MnmG subunits. Requires K(+) as cofactor.

It is found in the cytoplasm. In terms of biological role, exhibits a very high intrinsic GTPase hydrolysis rate. Involved in the addition of a carboxymethylaminomethyl (cmnm) group at the wobble position (U34) of certain tRNAs, forming tRNA-cmnm(5)s(2)U34. In Acetivibrio thermocellus (strain ATCC 27405 / DSM 1237 / JCM 9322 / NBRC 103400 / NCIMB 10682 / NRRL B-4536 / VPI 7372) (Clostridium thermocellum), this protein is tRNA modification GTPase MnmE.